We begin with the raw amino-acid sequence, 115 residues long: MSDDEELEKIRRRQMEELQRQAMQRQMAEEEEKQREIEKARRQQILRQILDPSARERLNNVRLVRPDLADNVENQLIQLASMGRINRIIKESDIIDILSKLTENKREPKIERRSK.

A disordered region spans residues 18–37 (LQRQAMQRQMAEEEEKQREI).

The protein belongs to the PDCD5 family.

The chain is DNA-binding protein TV0008 from Thermoplasma volcanium (strain ATCC 51530 / DSM 4299 / JCM 9571 / NBRC 15438 / GSS1).